Here is an 8903-residue protein sequence, read N- to C-terminus: Nonribosomal peptide synthetase vlms (8903 aa).

The 74-residue stretch at 11–84 (GSCRTTLGKV…ELADSIDEQN (74 aa)) folds into the Carrier 1 domain. The interval 13–81 (CRTTLGKVAA…TLAELADSID (69 aa)) is thiolation (T) domain 1. Residue serine 45 is modified to O-(pantetheine 4'-phosphoryl)serine. Adenylation (A) domain regions lie at residues 59-736 (GIWV…SHLP) and 989-1386 (MAAQ…IKIR). A condensation (C) domain 1 region spans residues 572-953 (VPHQLDTEKL…FLLDGVNMSI (382 aa)). The Carrier 2 domain occupies 1524–1600 (SSMSTVEQEL…QLALAAESQA (77 aa)). The interval 1529-1597 (VEQELRQIWS…TIPQLALAAE (69 aa)) is thiolation (T) domain 2. The residue at position 1561 (serine 1561) is an O-(pantetheine 4'-phosphoryl)serine. Residues 1613-2050 (FPLSPIQKMY…TVKELAAVSA (438 aa)) form an epimerase (E) domain 1 region. The tract at residues 2091-2523 (DILPCSPIQQ…LLSVSEENKL (433 aa)) is condensation (C) domain 2. An adenylation (A) domain 2 region spans residues 2546–2943 (MSSHADATAI…GRQDSQVKIR (398 aa)). The region spanning 3084 to 3160 (LFTTAIERQL…ELALQAKMVD (77 aa)) is the Carrier 3 domain. The thiolation (T) domain 3 stretch occupies residues 3089 to 3157 (IERQLRQVWS…TIPELALQAK (69 aa)). Serine 3121 is modified (O-(pantetheine 4'-phosphoryl)serine). An epimerase (E) domain 2 region spans residues 3174–3614 (FALSPIQQMY…AIKSLVEELM (441 aa)). Residues 3655 to 4093 (EDILPCSPMQ…LMSTKDIQQL (439 aa)) form a condensation (C) domain 3 region. Residues 4114–4512 (ERLNTQPESM…GRIDTQIKIR (399 aa)) are adenylation (A) domain 3. In terms of domain architecture, Carrier 4 spans 4649–4725 (APRTTMEKKL…DLAEATELKC (77 aa)). The thiolation (T) domain 4 stretch occupies residues 4654-4722 (MEKKLRDLFA…ILADLAEATE (69 aa)). At serine 4686 the chain carries O-(pantetheine 4'-phosphoryl)serine. The segment at 4775–5191 (EDVYPCSPLQ…AQLQMLSEED (417 aa)) is condensation (C) domain 4. The interval 5216 to 5614 (ETMTSQPDAP…GRRDTQVKIR (399 aa)) is adenylation (A) domain 4. One can recognise a Carrier 5 domain in the interval 5753 to 5829 (APTTAMEKRL…DLAQELEQRH (77 aa)). Residues 5758–5826 (MEKRLQNLFC…RLGDLAQELE (69 aa)) form a thiolation (T) domain 5 region. Serine 5790 is modified (O-(pantetheine 4'-phosphoryl)serine). A region of interest (condensation (C) domain 5) is located at residue glutamate 5875. The segment at 6311–6702 (EEQMSLRPSE…GRMDGQIKIR (392 aa)) is adenylation (A) domain 5. In terms of domain architecture, Carrier 6 spans 6836–6912 (SSATNTERQL…ELAATLEVMD (77 aa)). The segment at 6841 to 6909 (TERQLRQIWS…TIPELAATLE (69 aa)) is thiolation (T) domain 6. Position 6873 is an O-(pantetheine 4'-phosphoryl)serine (serine 6873). The interval 6923–7349 (GFFELSPIQR…YGRTIKTLVE (427 aa)) is epimerase (E) domain 3. The condensation (C) domain 6 stretch occupies residues 7391–7823 (EDILPCSPIQ…LVLTNDEAQI (433 aa)). The segment at 7844–8240 (EQMARKPEAQ…LDRIGTQVKI (397 aa)) is adenylation (A) domain 6. The Carrier 7 domain occupies 8368-8444 (APISATEAVF…AMAACVSDVS (77 aa)). The segment at 8369-8441 (PISATEAVFC…VLHAMAACVS (73 aa)) is thiolation (T) domain 7. The residue at position 8405 (serine 8405) is an O-(pantetheine 4'-phosphoryl)serine. The interval 8482–8897 (DVLPTTEFQT…MENPRSTVGH (416 aa)) is condensation (C) domain 7.

Belongs to the NRP synthetase family.

It participates in secondary metabolite biosynthesis. Nonribosomal peptide synthetase; part of the gene cluster that mediates the biosynthesis of verlamelin, a lipopeptide that exhibits antifungal activity against plant pathogenic fungi. Verlamelin is a cyclic hexadepsipeptide and is bridged by ester bonding between a 5-hydroxytetradecanoic acid moiety and a carboxyl group on the terminal Val of amide-bonded tetradecanoyl-hexapeptide D-allo-Thr-D-Ala-L-Pro-L-Gln-D-Tyr-L-Val. VlmA and vlmB are altogether regarded as essential components in the biosynthesis of 5-hydroxytetradecanoic acid. VlmA catalyzes the hydroxylation at position C5 of tetradecanoic acid produced in primary metabolism, while the precise function of vlmB still remains to be solved. To be loaded onto the waiting NRPS, 5-hydroxytetradecanoic acid is activated in the form of acyladenylate by the AMP-dependent ligase vlmC. VlmS seems to accept the fatty-acyl intermediate onto the initial module to further elongate amino acid residues by the downstream modules. In addition, in the last module at its C-terminus, vlmS contains a surplus condensation (C) domain that may be involved in cyclization, the last step to form verlamelin. The protein is Nonribosomal peptide synthetase vlms of Lecanicillium sp.